The primary structure comprises 428 residues: GTPase Obg (428 aa).

One can recognise an Obg domain in the interval 1–158; it reads MFVDQVKVYV…RYIVLELKVL (158 aa). A disordered region spans residues 117-143; it reads AKGGRGGRGNTRFATPANPAPQLSEHG. Positions 159–329 constitute an OBG-type G domain; that stretch reads ADVGLVGFPS…LLFEVANQLE (171 aa). Residues 165 to 172, 190 to 194, 212 to 215, 282 to 285, and 310 to 312 contribute to the GTP site; these read GFPSVGKS, FTTLV, DLPG, NKMD, and SAV. Positions 172 and 192 each coordinate Mg(2+). The region spanning 350–428 is the OCT domain; sequence TMEDEEIPFN…LLEFEFEFID (79 aa).

Belongs to the TRAFAC class OBG-HflX-like GTPase superfamily. OBG GTPase family. In terms of assembly, monomer. Requires Mg(2+) as cofactor.

It is found in the cytoplasm. Its function is as follows. An essential GTPase which binds GTP, GDP and possibly (p)ppGpp with moderate affinity, with high nucleotide exchange rates and a fairly low GTP hydrolysis rate. Plays a role in control of the cell cycle, stress response, ribosome biogenesis and in those bacteria that undergo differentiation, in morphogenesis control. The polypeptide is GTPase Obg (Bacillus velezensis (strain DSM 23117 / BGSC 10A6 / LMG 26770 / FZB42) (Bacillus amyloliquefaciens subsp. plantarum)).